The sequence spans 177 residues: uncharacterized protein (177 aa).

The first 22 residues, Met-1–Ala-22, serve as a signal peptide directing secretion. 3 helical membrane passes run Val-31 to Phe-51, Ile-94 to Val-114, and Leu-136 to Ile-156.

It is found in the membrane. This is an uncharacterized protein from Saccharomyces cerevisiae (strain ATCC 204508 / S288c) (Baker's yeast).